A 666-amino-acid chain; its full sequence is Nuclear distribution protein nudE homolog 1 (666 aa).

Residues 14–195 are a coiled coil; that stretch reads EEEIAHYREK…KDQLARAIAT (182 aa). Disordered stretches follow at residues 40-64, 220-310, 369-388, and 397-666; these read EFQQ…KQQA, DDIN…SGIP, KRVT…PAPH, and DHNT…KVKK. The segment covering 251–274 has biased composition (polar residues); that stretch reads RSGTMSSIPVASPSTKRFSQQIPH. 2 stretches are compositionally biased toward low complexity: residues 275–287 and 372–383; these read SPSF…STTS and TSTTSTTSSTTT. The segment covering 400–410 has biased composition (polar residues); the sequence is TTPTAQSQQFP. Low complexity-rich tracts occupy residues 449–465, 473–485, and 536–554; these read PTFR…LPSR, ASGS…SGTA, and SATP…STSN. Composition is skewed to polar residues over residues 587 to 599 and 614 to 638; these read RQSL…TPTT and SSLS…SGRP.

This sequence belongs to the nudE family. As to quaternary structure, self-associates. Interacts with PAC1.

It localises to the cytoplasm. It is found in the cytoskeleton. In terms of biological role, required for nuclear migration. In Cryptococcus neoformans var. neoformans serotype D (strain JEC21 / ATCC MYA-565) (Filobasidiella neoformans), this protein is Nuclear distribution protein nudE homolog 1 (NDE1).